Consider the following 447-residue polypeptide: N-succinylarginine dihydrolase (447 aa).

Residues 19–28 (AGLSFGNEAS), N110, and 137–138 (HR) each bind substrate. E174 is an active-site residue. R212 is a substrate binding site. H248 is a catalytic residue. Substrate contacts are provided by D250 and N359. C365 serves as the catalytic Nucleophile.

This sequence belongs to the succinylarginine dihydrolase family. In terms of assembly, homodimer.

The enzyme catalyses N(2)-succinyl-L-arginine + 2 H2O + 2 H(+) = N(2)-succinyl-L-ornithine + 2 NH4(+) + CO2. It participates in amino-acid degradation; L-arginine degradation via AST pathway; L-glutamate and succinate from L-arginine: step 2/5. Functionally, catalyzes the hydrolysis of N(2)-succinylarginine into N(2)-succinylornithine, ammonia and CO(2). The protein is N-succinylarginine dihydrolase of Escherichia coli O7:K1 (strain IAI39 / ExPEC).